Reading from the N-terminus, the 75-residue chain is Defensin-like protein 58 (75 aa).

Positions 1–23 are cleaved as a signal peptide; the sequence is MNITKRYVVIFFLVMLTKSLSNS. Disulfide bonds link cysteine 39–cysteine 73, cysteine 43–cysteine 66, cysteine 52–cysteine 71, and cysteine 56–cysteine 72.

It belongs to the DEFL family.

The protein resides in the secreted. The chain is Defensin-like protein 58 from Arabidopsis thaliana (Mouse-ear cress).